A 376-amino-acid chain; its full sequence is Alcohol dehydrogenase 1 (376 aa).

N-acetylserine is present on serine 2. Zn(2+) is bound by residues cysteine 47, histidine 68, cysteine 98, cysteine 101, cysteine 104, cysteine 112, and cysteine 176. NAD(+) contacts are provided by residues 201–206 (GLGGVG), aspartate 225, lysine 230, 294–296 (VGV), and arginine 371.

Belongs to the zinc-containing alcohol dehydrogenase family. Class-I subfamily. Homodimer. Zn(2+) is required as a cofactor.

Its subcellular location is the cytoplasm. The enzyme catalyses a primary alcohol + NAD(+) = an aldehyde + NADH + H(+). It carries out the reaction a secondary alcohol + NAD(+) = a ketone + NADH + H(+). The protein is Alcohol dehydrogenase 1 (ADH1) of Gallus gallus (Chicken).